A 537-amino-acid chain; its full sequence is Sodium/hydrogen exchanger 9B2 (537 aa).

The span at 1-10 shows a compositional bias: basic and acidic residues; it reads MGDEDKRITY. The segment at 1 to 33 is disordered; sequence MGDEDKRITYEDSEPSTGMNYTPSMHQETQEET. The Cytoplasmic portion of the chain corresponds to 1–86; it reads MGDEDKRITY…ACPPHGLLDR (86 aa). Residues 15–27 are compositionally biased toward polar residues; sequence PSTGMNYTPSMHQ. Phosphoserine is present on S49. A helical membrane pass occupies residues 87–104; that stretch reads VVTNVTIIVLLWAVIWSI. Residues 105 to 113 lie on the Extracellular side of the membrane; it reads TGSECLPGG. Residues 114–133 form a helical membrane-spanning segment; that stretch reads NLFGIIILFYCAIIGGKLLG. The Cytoplasmic segment spans residues 134-144; that stretch reads LIKLPTLPPLP. Residues 145–161 traverse the membrane as a helical segment; the sequence is SLLGMLLAGFLIRNIPV. Residues 162 to 171 are Extracellular-facing; it reads INDNVQIKHK. A helical transmembrane segment spans residues 172 to 189; sequence WSSSLRSIALSIILVRAG. Over 190-200 the chain is Cytoplasmic; that stretch reads LGLDSKALKKL. Residues 201 to 227 traverse the membrane as a helical segment; that stretch reads KGVCVRLSMGPCIVEACTSALLAHYLL. The Extracellular segment spans residues 228 to 233; the sequence is GLPWQW. The chain crosses the membrane as a helical span at residues 234-242; that stretch reads GFILGFVLG. Residues 243-270 are Cytoplasmic-facing; that stretch reads AVSPAVVVPSMLLLQGGGYGVEKGVPTL. Positions 244, 275, 278, and 279 each coordinate Na(+). The helical transmembrane segment at 271–290 threads the bilayer; that stretch reads LMAAGSFDDILAITGFNTCL. The Extracellular segment spans residues 291–300; the sequence is GIAFSTGSTV. Residues 301–324 form a helical membrane-spanning segment; that stretch reads FNVLRGVLEVVIGVATGSVLGFFI. Over 325–339 the chain is Cytoplasmic; that stretch reads QYFPSCDQDKLVCKR. Residues 340–357 traverse the membrane as a helical segment; it reads TFLVLGLSVLAVFSSVHF. Topologically, residues 358-361 are extracellular; that stretch reads GFPG. Residues 362-373 form a helical membrane-spanning segment; that stretch reads SGGLCTLVMAFL. Topologically, residues 374 to 390 are cytoplasmic; it reads AGMGWTSEKAEVEKIIA. The chain crosses the membrane as a helical span at residues 391–411; sequence VAWDIFQPLLFGLIGAEVSIA. At 412–417 the chain is on the extracellular side; it reads SLRPET. The helical transmembrane segment at 418–440 threads the bilayer; the sequence is VGLCVATVGIAVLIRILTTFLMV. Topologically, residues 441–461 are cytoplasmic; sequence CFAGFNLKEKIFISFAWLPKA. Residues 462-473 traverse the membrane as a helical segment; it reads TVQAAIGSVALD. Over 474–486 the chain is Extracellular; it reads TARSHGEKQLEDY. The helical transmembrane segment at 487–509 threads the bilayer; sequence GMDVLTVAFLSILITAPIGSLLI. Over 510-537 the chain is Cytoplasmic; it reads GLLGPRLLQKVEHQNKDEEVQGETSVQV.

Belongs to the monovalent cation:proton antiporter 1 (CPA1) transporter (TC 2.A.36) family. As to quaternary structure, homodimer; dimerization is essential for SLC9B2 activity. Lipids seem to play a role in the stabilization of the dimerization subdomain.

The protein localises to the cell membrane. It localises to the mitochondrion membrane. The protein resides in the endosome membrane. It is found in the recycling endosome membrane. Its subcellular location is the cytoplasmic vesicle. The protein localises to the secretory vesicle. It localises to the synaptic vesicle membrane. The protein resides in the basolateral cell membrane. It is found in the apical cell membrane. It carries out the reaction Li(+)(out) + H(+)(in) = Li(+)(in) + H(+)(out). It catalyses the reaction Li(+)(in) + Na(+)(out) = Li(+)(out) + Na(+)(in). The enzyme catalyses Na(+)(in) + H(+)(out) = Na(+)(out) + H(+)(in). Its activity is regulated as follows. Allosterically inhibited by the N-terminal domain. Inhibited by phloretin. In terms of biological role, electroneutral Na(+) Li(+)/H(+) antiporter that extrudes Na(+) or Li(+) in exchange for external protons across the membrane. Uses the proton gradient/membrane potential to extrude sodium. Contributes to the regulation of intracellular pH and sodium homeostasis. Also able to mediate Na(+)/Li(+) antiporter activity in kidney. May play a physiological role in renal tubular function and blood pressure homeostasis. Plays an important role for insulin secretion and clathrin-mediated endocytosis in beta-cells. Involved in sperm motility and fertility. It is controversial whether SLC9B2 plays a role in osteoclast differentiation or not. The sequence is that of Sodium/hydrogen exchanger 9B2 (SLC9B2) from Pongo abelii (Sumatran orangutan).